Reading from the N-terminus, the 105-residue chain is Delta-hexatoxin-Mg1a (105 aa).

An N-terminal signal peptide occupies residues M1–G18. The propeptide occupies E19–V60. Disulfide bonds link C63–C77, C70–C82, C76–C93, and C78–C105.

Belongs to the neurotoxin 06 (delta-actx) family. Expressed by the venom gland.

It is found in the secreted. Selectively slows channel inactivation of mammalian Nav1.1/SCN1A, Nav1.3/SCN3A, and Nav1.6/SCN8A and shows higher affinity for insect Nav1/para channels (site 3). Induces tonic repetitive firing of nerve impulses in insect neurons accompanied by plateau potentials. This Macrothele gigas (Japanese funnel web spider) protein is Delta-hexatoxin-Mg1a.